The sequence spans 134 residues: Putative pre-16S rRNA nuclease (134 aa).

The protein belongs to the YqgF nuclease family.

Its subcellular location is the cytoplasm. Could be a nuclease involved in processing of the 5'-end of pre-16S rRNA. In Helicobacter pylori (strain Shi470), this protein is Putative pre-16S rRNA nuclease.